We begin with the raw amino-acid sequence, 411 residues long: MTDGPIKVNSEIGALKTVLLKRPGKELENLVPDYLDGLLFDDIPYLEVAQKEHDHFAQVLREEGVEVLYLEKLAAESIENPQVRSEFIDDVLAESKKTILGHEEEIKALFATLSNQELVDKIMSGVRKEEINPKCTHLVEYMDDKYPFYLDPMPNLYFTRDPQASIGHGITINRMFWRARRRESIFIQYIVKHHPRFKDANIPIWLDRDCPFNIEGGDELVLSKDVLAIGVSERTSAQAIEKLARRIFENPQATFKKVVAIEIPTSRTFMHLDTVFTMIDYDKFTMHSAILKAEGNMNIFIIEYDDVNKDIAIKQSSHLKDTLEDVLGIDDIQFIPTGNGDVIDGAREQWNDGSNTLCIRPGVVVTYDRNYVSNDLLRQKGIKVIEISGSELVRGRGGPRCMSQPLFREDI.

Residue cysteine 401 is the Amidino-cysteine intermediate of the active site.

This sequence belongs to the arginine deiminase family.

The protein resides in the cytoplasm. It carries out the reaction L-arginine + H2O = L-citrulline + NH4(+). It functions in the pathway amino-acid degradation; L-arginine degradation via ADI pathway; carbamoyl phosphate from L-arginine: step 1/2. The polypeptide is Arginine deiminase (Staphylococcus aureus (strain bovine RF122 / ET3-1)).